The chain runs to 475 residues: MAPKTETKAGAGFKAGVKDYRLTYYTPDYQVKDTDILAAFRMTPQPGVPPEECGAAVAAESSTGTWTTVWTDGLTSLDRYKGRCYDLEPVKGEENQYIAYVAYPLDLFEEGSVTNLFTSIVGNVFGFKALRALRLEDLRISVAYAKTFQGPPHGIEVERDKLNKYGRPLLGCTIKPKLGLSAKNYGRAVYECLRGGLDFTKDDENVNSQPFMRWRDRFLFVAEAIYKSQAETGEIKGHYLNATAATCEAMLQRAQCAKELGVPIIMHDYLTGGWTANTSLAHYCRDHGLLLHIHRAMHAVIDRQKNHGMHFRVLAKSLRMSGGDHLHSGTVVGKLEGEREVTLGFVDLMRDDFIEKDRARGIYFTQDWVLLPGVMPVASGGIHVWHMPALVEIFGDDACLQFGGGTLGHPWGNAPGAAANRIACEACVQARNEGRHLAREGGDVIRAACKWSPELAAACEVWKEIKFEFETIDTL.

Positions 1–2 are excised as a propeptide; sequence MA. Proline 3 is subject to N-acetylproline. The residue at position 14 (lysine 14) is an N6,N6,N6-trimethyllysine. Positions 123 and 173 each coordinate substrate. The active-site Proton acceptor is the lysine 175. Lysine 177 is a substrate binding site. Residues lysine 201, aspartate 203, and glutamate 204 each coordinate Mg(2+). At lysine 201 the chain carries N6-carboxylysine. Residue histidine 294 is the Proton acceptor of the active site. The substrate site is built by arginine 295, histidine 327, and serine 379.

Belongs to the RuBisCO large chain family. Type I subfamily. In terms of assembly, heterohexadecamer of 8 large chains and 8 small chains; disulfide-linked. The disulfide link is formed within the large subunit homodimers. It depends on Mg(2+) as a cofactor. In terms of processing, the disulfide bond which can form in the large chain dimeric partners within the hexadecamer appears to be associated with oxidative stress and protein turnover.

It is found in the plastid. It localises to the chloroplast. It carries out the reaction 2 (2R)-3-phosphoglycerate + 2 H(+) = D-ribulose 1,5-bisphosphate + CO2 + H2O. The enzyme catalyses D-ribulose 1,5-bisphosphate + O2 = 2-phosphoglycolate + (2R)-3-phosphoglycerate + 2 H(+). Its function is as follows. RuBisCO catalyzes two reactions: the carboxylation of D-ribulose 1,5-bisphosphate, the primary event in carbon dioxide fixation, as well as the oxidative fragmentation of the pentose substrate in the photorespiration process. Both reactions occur simultaneously and in competition at the same active site. This is Ribulose bisphosphate carboxylase large chain from Bryopsis maxima (Green alga).